Consider the following 806-residue polypeptide: ATP-dependent zinc metalloprotease FTSH 11, chloroplastic/mitochondrial (806 aa).

The transit peptide at 1–63 (MSSSTLQASL…RFRPLPCSLR (63 aa)) directs the protein to the chloroplast and mitochondrion. Residues 106-116 (FVGGEETKSGG) are compositionally biased toward basic and acidic residues. Residues 106–130 (FVGGEETKSGGEEAEVSNGVTEGKE) are disordered. Residues 301–321 (LVSTILFTVAVGLVWIMGAAA) form a helical membrane-spanning segment. ATP is bound at residue 402-409 (GAPGTGKT). His620 contacts Zn(2+). The active site involves Glu621. 2 residues coordinate Zn(2+): His624 and Asp698.

The protein in the N-terminal section; belongs to the AAA ATPase family. This sequence in the C-terminal section; belongs to the peptidase M41 family. Homooligomer. Zn(2+) is required as a cofactor.

It is found in the mitochondrion inner membrane. The protein localises to the plastid. It localises to the chloroplast thylakoid membrane. Functionally, probable ATP-dependent zinc metallopeptidase. Involved in the assembly and/or stability of the complexes I and V. Involved in thermotolerance but not in high light stress resistance or in the assembly/stability of the complexes I and V of the mitochondrial oxidative phosphorylation system. This chain is ATP-dependent zinc metalloprotease FTSH 11, chloroplastic/mitochondrial (FTSH11), found in Arabidopsis thaliana (Mouse-ear cress).